The sequence spans 291 residues: HTH-type transcriptional regulator CitR (291 aa).

The HTH lysR-type domain maps to 1–58; the sequence is MDFKWLHTFVTAAKYENFRKTAETLFLSQPTVTVHIKQLEKEISCKLFERKGRQIQLT. The H-T-H motif DNA-binding region spans 18-37; the sequence is FRKTAETLFLSQPTVTVHIK.

This sequence belongs to the LysR transcriptional regulatory family.

The protein localises to the cytoplasm. Functionally, negative regulatory protein for the citA gene for citrate synthase I. The sequence is that of HTH-type transcriptional regulator CitR (citR) from Bacillus subtilis (strain 168).